The chain runs to 605 residues: Membrane protein insertase YidC (605 aa).

The helical transmembrane segment at M8 to A28 threads the bilayer. Over residues R35–P47 the composition is skewed to low complexity. Residues R35 to A71 form a disordered region. 4 consecutive transmembrane segments (helical) span residues L377 to L397, W451 to I471, L496 to V516, and F540 to I560.

It belongs to the OXA1/ALB3/YidC family. Type 1 subfamily. In terms of assembly, interacts with the Sec translocase complex via SecD. Specifically interacts with transmembrane segments of nascent integral membrane proteins during membrane integration.

Its subcellular location is the cell inner membrane. Functionally, required for the insertion and/or proper folding and/or complex formation of integral membrane proteins into the membrane. Involved in integration of membrane proteins that insert both dependently and independently of the Sec translocase complex, as well as at least some lipoproteins. Aids folding of multispanning membrane proteins. This is Membrane protein insertase YidC from Methylobacterium nodulans (strain LMG 21967 / CNCM I-2342 / ORS 2060).